The primary structure comprises 282 residues: Nucleotide-binding protein Fnod_1159 (282 aa).

Residue 9 to 16 (GHSGAGKS) participates in ATP binding. Position 57-60 (57-60 (DIRS)) interacts with GTP.

This sequence belongs to the RapZ-like family.

Displays ATPase and GTPase activities. The protein is Nucleotide-binding protein Fnod_1159 of Fervidobacterium nodosum (strain ATCC 35602 / DSM 5306 / Rt17-B1).